The chain runs to 110 residues: Minor capsid protein VP2 (110 aa).

Belongs to the vesivirus VP2 protein family. Homooligomer. The portal-like structure consists in 12 copies of VP2. Interacts with capsid protein VP1.

It localises to the virion. The protein resides in the host cytoplasm. In terms of biological role, minor structural protein that forms a portal-like structure at a unique three-fold axis of symmetry, following binding to the host receptor. The channel formed by VP2 may allow the delivery of the viral genome through the host endosomal membrane. This Otariidae (fur seals &amp; sea lions) protein is Minor capsid protein VP2.